The chain runs to 580 residues: Nuclear body protein SP140-like protein (580 aa).

Residues 33–149 enclose the HSR domain; that stretch reads SLQRLFTEDQ…IYKSFKNAIQ (117 aa). The interval 155–293 is disordered; it reads QESDRKEREE…RSRASRKHKD (139 aa). Residues 156 to 170 are compositionally biased toward basic and acidic residues; the sequence is ESDRKEREERPDIKL. Lysine 169 is covalently cross-linked (Glycyl lysine isopeptide (Lys-Gly) (interchain with G-Cter in SUMO2)). At serine 180 the chain carries Phosphoserine. Over residues 207–219 the composition is skewed to basic residues; that stretch reads KPKRKRRKKKGHG. A compositionally biased stretch (polar residues) spans 224-236; it reads GTRTQKNNQQNDN. Residues 280–290 show a composition bias toward basic residues; it reads QKRVRSRASRK. Lysine 292 participates in a covalent cross-link: Glycyl lysine isopeptide (Lys-Gly) (interchain with G-Cter in SUMO2). Residues 293–374 form the SAND domain; the sequence is DETVDFQAPL…RRLMEEGSLP (82 aa). Residues 403 to 449 form a PHD-type zinc finger; the sequence is LDECEVCRDGGELFCCDTCSRVFHEDCHIPPVESEKTPWNCIFCRMK. In terms of domain architecture, Bromo spans 467–570; it reads QMCPEEQLKC…AEFEKDFKEV (104 aa).

In Homo sapiens (Human), this protein is Nuclear body protein SP140-like protein (SP140L).